Reading from the N-terminus, the 152-residue chain is Eukaryotic translation initiation factor 2 subunit 3 (152 aa).

An N-acetylalanine modification is found at A1. A GTP-binding site is contributed by 51-54 (NKID).

The protein belongs to the TRAFAC class translation factor GTPase superfamily. Classic translation factor GTPase family. EIF2G subfamily. Eukaryotic translation initiation factor 2 eIF2 is a heterotrimeric complex composed of an alpha (EIF2S1), a beta (EIF2S2) and a gamma (EIF2S3) chain. eIF2 is member of the 43S pre-initiation complex (43S PIC). Interacts (via C-terminus) with CDC123; the interaction is direct.

The protein localises to the cytoplasm. The protein resides in the cytosol. Its function is as follows. Member of the eIF2 complex that functions in the early steps of protein synthesis by forming a ternary complex with GTP and initiator tRNA. This complex binds to a 40S ribosomal subunit, followed by mRNA binding to form the 43S pre-initiation complex (43S PIC). Junction of the 60S ribosomal subunit to form the 80S initiation complex is preceded by hydrolysis of the GTP bound to eIF2 and release of an eIF2-GDP binary complex. In order for eIF2 to recycle and catalyze another round of initiation, the GDP bound to eIF2 must exchange with GTP by way of a reaction catalyzed by eIF-2B. This Oryctolagus cuniculus (Rabbit) protein is Eukaryotic translation initiation factor 2 subunit 3 (EIF2S3).